We begin with the raw amino-acid sequence, 189 residues long: Segregation and condensation protein B (189 aa).

It belongs to the ScpB family. In terms of assembly, homodimer. Homodimerization may be required to stabilize the binding of ScpA to the Smc head domains. Component of a cohesin-like complex composed of ScpA, ScpB and the Smc homodimer, in which ScpA and ScpB bind to the head domain of Smc. The presence of the three proteins is required for the association of the complex with DNA.

The protein localises to the cytoplasm. Functionally, participates in chromosomal partition during cell division. May act via the formation of a condensin-like complex containing Smc and ScpA that pull DNA away from mid-cell into both cell halves. The chain is Segregation and condensation protein B from Streptococcus mitis.